The primary structure comprises 360 residues: Glutamate--cysteine ligase (360 aa).

Belongs to the glutamate--cysteine ligase type 2 family. YbdK subfamily.

It carries out the reaction L-cysteine + L-glutamate + ATP = gamma-L-glutamyl-L-cysteine + ADP + phosphate + H(+). In terms of biological role, catalyzes the synthesis of gamma-glutamylcysteine (gamma-GC), the main low-molecular-weight thiol compound instead of glutathione in halophilic archaea. The chain is Glutamate--cysteine ligase from Halobacterium salinarum (strain ATCC 29341 / DSM 671 / R1).